The chain runs to 146 residues: Hemoglobin subunit beta (146 aa).

Val-1 is subject to N-acetylvaline. A Globin domain is found at 2-146 (HLSGEEKAAV…VANALAHKYH (145 aa)). Phosphothreonine is present on Thr-12. Ser-44 carries the post-translational modification Phosphoserine. Lys-59 carries the post-translational modification N6-acetyllysine. Heme b is bound at residue His-63. At Lys-82 the chain carries N6-acetyllysine. His-92 lines the heme b pocket. Cys-93 is modified (S-nitrosocysteine). Lys-144 is modified (N6-acetyllysine).

Belongs to the globin family. Heterotetramer of two alpha chains and two beta chains. Red blood cells.

Functionally, involved in oxygen transport from the lung to the various peripheral tissues. In Pteropus alecto (Black flying fox), this protein is Hemoglobin subunit beta (HBB).